The chain runs to 75 residues: Large ribosomal subunit protein bL31 (75 aa).

The Zn(2+) site is built by Cys-16, Cys-18, Cys-37, and Cys-40.

Belongs to the bacterial ribosomal protein bL31 family. Type A subfamily. Part of the 50S ribosomal subunit. Zn(2+) serves as cofactor.

Functionally, binds the 23S rRNA. This chain is Large ribosomal subunit protein bL31, found in Nitrosospira multiformis (strain ATCC 25196 / NCIMB 11849 / C 71).